Consider the following 179-residue polypeptide: Acireductone dioxygenase (179 aa).

Residues 1–21 (MVQAWYMDDSTEDQRKPHHLQ) are disordered. Fe(2+) is bound by residues His88, His90, Glu94, and His133. The Ni(2+) site is built by His88, His90, Glu94, and His133.

This sequence belongs to the acireductone dioxygenase (ARD) family. Monomer. Interacts with MMP14. Fe(2+) serves as cofactor. Requires Ni(2+) as cofactor.

The protein resides in the cytoplasm. The protein localises to the nucleus. It localises to the cell membrane. It catalyses the reaction 1,2-dihydroxy-5-(methylsulfanyl)pent-1-en-3-one + O2 = 4-methylsulfanyl-2-oxobutanoate + formate + 2 H(+). The catalysed reaction is 1,2-dihydroxy-5-(methylsulfanyl)pent-1-en-3-one + O2 = 3-(methylsulfanyl)propanoate + CO + formate + 2 H(+). Its pathway is amino-acid biosynthesis; L-methionine biosynthesis via salvage pathway; L-methionine from S-methyl-5-thio-alpha-D-ribose 1-phosphate: step 5/6. Its function is as follows. Catalyzes 2 different reactions between oxygen and the acireductone 1,2-dihydroxy-3-keto-5-methylthiopentene (DHK-MTPene) depending upon the metal bound in the active site. Fe-containing acireductone dioxygenase (Fe-ARD) produces formate and 2-keto-4-methylthiobutyrate (KMTB), the alpha-ketoacid precursor of methionine in the methionine recycle pathway. Ni-containing acireductone dioxygenase (Ni-ARD) produces methylthiopropionate, carbon monoxide and formate, and does not lie on the methionine recycle pathway. The sequence is that of Acireductone dioxygenase (adi1) from Xenopus tropicalis (Western clawed frog).